We begin with the raw amino-acid sequence, 312 residues long: DNA-directed RNA polymerase subunit alpha (312 aa).

The alpha N-terminal domain (alpha-NTD) stretch occupies residues 1 to 229 (MLQYQIDRIE…ELFQPLATVT (229 aa)). Positions 246-312 (IPLEELNLSV…ISIPQSRTSA (67 aa)) are alpha C-terminal domain (alpha-CTD).

This sequence belongs to the RNA polymerase alpha chain family. As to quaternary structure, in cyanobacteria the RNAP catalytic core is composed of 2 alpha, 1 beta, 1 beta', 1 gamma and 1 omega subunit. When a sigma factor is associated with the core the holoenzyme is formed, which can initiate transcription.

The catalysed reaction is RNA(n) + a ribonucleoside 5'-triphosphate = RNA(n+1) + diphosphate. Functionally, DNA-dependent RNA polymerase catalyzes the transcription of DNA into RNA using the four ribonucleoside triphosphates as substrates. This chain is DNA-directed RNA polymerase subunit alpha, found in Prochlorococcus marinus (strain SARG / CCMP1375 / SS120).